Consider the following 789-residue polypeptide: Isoamylase SU1, chloroplastic (789 aa).

The N-terminal 44 residues, 1-44, are a transit peptide targeting the chloroplast; it reads MAQQLPCVSSPRPLLAVPAGRWRAGVRGRPNVAGLGRGRLSLHA. The active-site Nucleophile is Asp-417. Catalysis depends on Glu-473, which acts as the Proton donor.

Belongs to the glycosyl hydrolase 13 family.

It localises to the plastid. Its subcellular location is the chloroplast. It carries out the reaction Hydrolysis of (1-&gt;6)-alpha-D-glucosidic branch linkages in glycogen, amylopectin and their beta-limit dextrins.. It participates in glycan biosynthesis; starch biosynthesis. Functionally, isoamylase starch-debranching enzyme involved in amylopectin biosynthesis in endosperm. Functions by removing excess branches or improper branches that interfere with the formation of double helices of the cluster chains of amylopectin and crystallization of starch. The protein is Isoamylase SU1, chloroplastic of Zea mays (Maize).